Reading from the N-terminus, the 291-residue chain is Potassium-transporting ATPase subunit beta (291 aa).

At 1–36 the chain is on the cytoplasmic side; the sequence is MAALQEKKSCSQRMEEFRHYCWNPDTGQMLGRTLSR. Residues 37–57 form a helical; Signal-anchor for type II membrane protein membrane-spanning segment; that stretch reads WVWISLYYVAFYVVMTGLFAL. The Extracellular segment spans residues 58-291; that stretch reads CIYVLMQTID…KVEFKLKIQK (234 aa). 5 N-linked (GlcNAc...) asparagine glycosylation sites follow: N99, N103, N130, N146, and N161. A disulfide bridge links C131 with C152. A disulfide bridge connects residues C162 and C178. Residues N193 and N222 are each glycosylated (N-linked (GlcNAc...) asparagine). Positions 194-291 are immunoglobulin-like; it reads STPPRVDCTF…KVEFKLKIQK (98 aa). A disulfide bond links C201 and C263.

The protein belongs to the X(+)/potassium ATPases subunit beta family. The ATPase pump is composed of two subunits: alpha (catalytic) and beta (regulatory). Interacts with alpha subunit ATP12A; this interaction is required for the formation of a functionally active pump and targeting at the plasma membrane. Interacts (via N-terminus) with alpha subunit ATP4A (via the P-domain). N-glycosylation is necessary for assembly and functional expression of the pump at the plasma membrane.

It localises to the apical cell membrane. It is found in the cell membrane. Functionally, the beta subunit of the gastric H(+)/K(+) ATPase pump which transports H(+) ions in exchange for K(+) ions across the apical membrane of parietal cells. Plays a structural and regulatory role in the assembly and membrane targeting of a functionally active pump. Within a transport cycle, the transfer of a H(+) ion across the membrane is coupled to ATP hydrolysis and is associated with a transient phosphorylation of the alpha subunit that shifts the pump conformation from inward-facing (E1) to outward-facing state (E2). Interacts with the phosphorylation domain of the alpha subunit and functions as a ratchet, stabilizing the lumenal-open E2 conformation and preventing the reverse reaction of the transport cycle. In Oryctolagus cuniculus (Rabbit), this protein is Potassium-transporting ATPase subunit beta (ATP4B).